Reading from the N-terminus, the 327-residue chain is Porphobilinogen deaminase (327 aa).

S-(dipyrrolylmethanemethyl)cysteine is present on C251.

Belongs to the HMBS family. Requires dipyrromethane as cofactor.

The catalysed reaction is 4 porphobilinogen + H2O = hydroxymethylbilane + 4 NH4(+). The protein operates within porphyrin-containing compound metabolism; protoporphyrin-IX biosynthesis; coproporphyrinogen-III from 5-aminolevulinate: step 2/4. In terms of biological role, catalyzes the tetrapolymerization of the monopyrrole porphobilinogen (PBG) into the hydroxymethylbilane pre-uroporphyrinogen in several discrete steps. This Saccharomyces cerevisiae (strain ATCC 204508 / S288c) (Baker's yeast) protein is Porphobilinogen deaminase (HEM3).